Reading from the N-terminus, the 615-residue chain is Nitrogen permease regulator 2 (615 aa).

The segment covering 143 to 167 has biased composition (low complexity); it reads STTTPSTAGPSSTPNPSSNTTPTHP. Disordered stretches follow at residues 143–176, 354–398, and 527–551; these read STTTPSTAGPSSTPNPSSNTTPTHPTSEKDTKDM, SLGS…QNSS, and SATGSRNTAQSGNLKPERPSKVSFE. Residue S362 is modified to Phosphoserine. Positions 373–398 are enriched in low complexity; that stretch reads SSSIPSNPDSRTTSFSSTSRVSQNSS. A compositionally biased stretch (polar residues) spans 527–539; sequence SATGSRNTAQSGN.

Belongs to the NPR2 family. In terms of assembly, component of the SEA complex composed of at least IML1/SEA1, RTC1/SEA2, MTC5/SEA3, NPR2, NPR3, SEA4, SEC13 and SEH1. Forms a heterodimer with NPR3.

It is found in the vacuole membrane. Functionally, component of the SEA complex which coats the vacuolar membrane and is involved in intracellular trafficking, autophagy, response to nitrogen starvation, and amino acid biogenesis. Mediates inactivation of the TORC1 complex in response to amino acid starvation. Post-transcriptional regulator of nitrogen permeases. May be involved in putative NPR1-dependent phosphorylation of nitrogen permeases or in the processing and targeting of nitrogen permeases at the level of the endoplasmic reticulum. This chain is Nitrogen permease regulator 2 (NPR2), found in Saccharomyces cerevisiae (strain ATCC 204508 / S288c) (Baker's yeast).